A 253-amino-acid chain; its full sequence is Leucyl/phenylalanyl-tRNA--protein transferase (253 aa).

The protein belongs to the L/F-transferase family.

The protein resides in the cytoplasm. It carries out the reaction N-terminal L-lysyl-[protein] + L-leucyl-tRNA(Leu) = N-terminal L-leucyl-L-lysyl-[protein] + tRNA(Leu) + H(+). It catalyses the reaction N-terminal L-arginyl-[protein] + L-leucyl-tRNA(Leu) = N-terminal L-leucyl-L-arginyl-[protein] + tRNA(Leu) + H(+). The catalysed reaction is L-phenylalanyl-tRNA(Phe) + an N-terminal L-alpha-aminoacyl-[protein] = an N-terminal L-phenylalanyl-L-alpha-aminoacyl-[protein] + tRNA(Phe). Functionally, functions in the N-end rule pathway of protein degradation where it conjugates Leu, Phe and, less efficiently, Met from aminoacyl-tRNAs to the N-termini of proteins containing an N-terminal arginine or lysine. The protein is Leucyl/phenylalanyl-tRNA--protein transferase of Bordetella petrii (strain ATCC BAA-461 / DSM 12804 / CCUG 43448).